The sequence spans 2285 residues: AT-rich interactive domain-containing protein 1A (2285 aa).

A compositionally biased stretch (low complexity) spans 1-14 (MAAQVAPAAASSLG). Disordered regions lie at residues 1-820 (MAAQ…ALPN) and 978-1005 (ATKM…TTTN). Alanine 2 carries the post-translational modification N-acetylalanine. The segment covering 23-35 (ELKKAEQQQREEA) has biased composition (basic and acidic residues). A phosphoserine mark is found at serine 58 and serine 79. 2 stretches are compositionally biased toward gly residues: residues 79 to 95 (SNGG…GGPG) and 121 to 130 (PGGGGGGSSD). 3 stretches are compositionally biased toward low complexity: residues 131 to 142 (GVGAPPHSAAAA), 212 to 221 (YNSYYPNRSA), and 228 to 265 (AYAL…SSSS). A Phosphoserine modification is found at serine 233. Residues 273–286 (AMGGGGPSAAGGGT) are compositionally biased toward gly residues. A Phosphothreonine modification is found at threonine 286. An LXXLL motif is present at residues 295-299 (LNQLL). The span at 295–306 (LNQLLTSPSSAR) shows a compositional bias: polar residues. Phosphoserine is present on serine 301. The segment covering 310–327 (GYPGGDYSGGPQDGGAGK) has biased composition (gly residues). Residues 338-353 (GAAAAAAAAAAASGGA) show a composition bias toward low complexity. 2 positions are modified to phosphoserine: serine 363 and serine 382. A compositionally biased stretch (low complexity) spans 400–425 (PYSQQQGPPSGPQQGHGYPGQPYGSQ). Arginine 429 carries the post-translational modification Asymmetric dimethylarginine. 3 stretches are compositionally biased toward low complexity: residues 447 to 457 (YTQQIPPYGQQ), 465 to 546 (QGQT…QHPQ), and 553 to 595 (QPQA…YSQQ). Phosphoserine is present on serine 604. Residues 610–621 (SQASSAPSMTSS) show a composition bias toward low complexity. The span at 628-637 (MNLSLQSRPS) shows a compositional bias: polar residues. A compositionally biased stretch (low complexity) spans 658–674 (SPGVSTSGISSSQGEQS). A compositionally biased stretch (polar residues) spans 675 to 685 (NPAQSPFSPHT). Phosphoserine occurs at positions 696, 698, 702, 730, 764, and 772. 2 stretches are compositionally biased toward polar residues: residues 730–747 (SGQS…SSIA) and 755–793 (RNPQ…QNSM). Over residues 797–807 (GPQGGQYGPQG) the composition is skewed to gly residues. The span at 808–820 (GYPRQPNYNALPN) shows a compositional bias: low complexity. One can recognise an ARID domain in the interval 1017 to 1108 (EPERKMWVDR…CLYAFECKIE (92 aa)). 2 disordered regions span residues 1113 to 1483 (PPPD…MMGG) and 1539 to 1603 (ANHE…SPSK). A compositionally biased stretch (low complexity) spans 1141 to 1154 (MQGPQTPQSTSSSM). Over residues 1162–1177 (PPTPASTPHSQIPPLP) the composition is skewed to pro residues. At serine 1184 the chain carries Phosphoserine. The span at 1194-1219 (GSDSTFQKRNSMTPNPGYQPSMNTSD) shows a compositional bias: polar residues. Serine 1235 is modified (phosphoserine). Arginine 1276 is subject to Omega-N-methylarginine. Composition is skewed to polar residues over residues 1299 to 1315 (NMST…SNPD) and 1339 to 1356 (YGNQ…PFPS). Over residues 1357–1367 (QQTTMYQQQQQ) the composition is skewed to low complexity. The Nuclear localization signal motif lies at 1368–1387 (NYKRPMDGTYGPPAKRHEGE). Residues 1396 to 1425 (GQGQPQQQQLPPAQPQPASQQQAAQPSPQQ) are compositionally biased toward low complexity. The span at 1468–1477 (PGTNAQQNMP) shows a compositional bias: polar residues. Pro residues predominate over residues 1554–1577 (PYGPSAPVPPMTRPPPSNYQPPPS). Position 1604 is a phosphoserine (serine 1604). N6-acetyllysine is present on lysine 1612. Residues 1709-1713 (LPGLL) carry the LXXLL motif. Disordered regions lie at residues 1747-1774 (PGRF…PKLE) and 1859-1907 (FESK…EKRI). Phosphoserine is present on residues serine 1751 and serine 1754. Residues 1761–1774 (GGEEEEELLGPKLE) show a composition bias toward acidic residues. The segment covering 1886–1895 (EGTPGTTDQE) has biased composition (low complexity). At threonine 1888 the chain carries Phosphothreonine. Lysine 1905 carries the N6-acetyllysine modification. Residues serine 1929 and serine 1944 each carry the phosphoserine modification. Short sequence motifs (LXXLL) lie at residues 1967–1971 (LCTLL) and 2085–2089 (LDGLL).

As to quaternary structure, component of SWI/SNF chromatin remodeling complexes, in some of which it can be mutually exclusive with ARID1B/BAF250B. The canonical complex contains a catalytic subunit (either SMARCA4/BRG1/BAF190A or SMARCA2/BRM/BAF190B) and at least SMARCE1, ACTL6A/BAF53, SMARCC1/BAF155, SMARCC2/BAF170, and SMARCB1/SNF5/BAF47. Other subunits specific to each of the complexes may also be present permitting several possible combinations developmentally and tissue specific. Component of the BAF (SWI/SNF-A) complex, which includes at least actin (ACTB), ARID1A/BAF250A, ARID1B/BAF250B, SMARCA2/BRM, SMARCA4/BRG1/BAF190A, ACTL6A/BAF53, ACTL6B/BAF53B, SMARCE1/BAF57, SMARCC1/BAF155, SMARCC2/BAF170, SMARCB1/SNF5/INI1, and one or more SMARCD1/BAF60A, SMARCD2/BAF60B, or SMARCD3/BAF60C. In muscle cells, the BAF complex also contains DPF3. Component of neural progenitors-specific chromatin remodeling complex (npBAF complex) composed of at least, ARID1A/BAF250A or ARID1B/BAF250B, SMARCD1/BAF60A, SMARCD3/BAF60C, SMARCA2/BRM/BAF190B, SMARCA4/BRG1/BAF190A, SMARCB1/BAF47, SMARCC1/BAF155, SMARCE1/BAF57, SMARCC2/BAF170, PHF10/BAF45A, ACTL6A/BAF53A and actin. Component of neuron-specific chromatin remodeling complex (nBAF complex) composed of at least, ARID1A/BAF250A or ARID1B/BAF250B, SMARCD1/BAF60A, SMARCD3/BAF60C, SMARCA2/BRM/BAF190B, SMARCA4/BRG1/BAF190A, SMARCB1/BAF47, SMARCC1/BAF155, SMARCE1/BAF57, SMARCC2/BAF170, DPF1/BAF45B, DPF3/BAF45C, ACTL6B/BAF53B and actin. Component of a SWI/SNF-like EBAFa complex, at least composed of SMARCA4/BRG1/BAF190A, SMARCB1/BAF47/SNF5, ACTL6A/BAF53A, SMARCE1/BAF57, SMARCD1/BAF60A, SMARCC1/BAF155, SMARCC2/BAF170, BAF250A and MLLT1/ENL. Interacts through its C-terminus with SMARCA2/BRM/BAF190B and SMARCA4/BRG1/BAF190A. Interacts with SMARCC1/BAF155. Interacts with FOS, FOSB isoform 1 and 2, FOSL1 and FOSL2. As to expression, highly expressed in spleen, thymus, prostate, testis, ovary, small intestine, colon, and PBL, and at a much lower level in heart, brain, placenta, lung, liver, skeletal muscle, kidney, and pancreas.

It localises to the nucleus. Involved in transcriptional activation and repression of select genes by chromatin remodeling (alteration of DNA-nucleosome topology). Component of SWI/SNF chromatin remodeling complexes that carry out key enzymatic activities, changing chromatin structure by altering DNA-histone contacts within a nucleosome in an ATP-dependent manner. Binds DNA non-specifically. Belongs to the neural progenitors-specific chromatin remodeling complex (npBAF complex) and the neuron-specific chromatin remodeling complex (nBAF complex). During neural development a switch from a stem/progenitor to a postmitotic chromatin remodeling mechanism occurs as neurons exit the cell cycle and become committed to their adult state. The transition from proliferating neural stem/progenitor cells to postmitotic neurons requires a switch in subunit composition of the npBAF and nBAF complexes. As neural progenitors exit mitosis and differentiate into neurons, npBAF complexes which contain ACTL6A/BAF53A and PHF10/BAF45A, are exchanged for homologous alternative ACTL6B/BAF53B and DPF1/BAF45B or DPF3/BAF45C subunits in neuron-specific complexes (nBAF). The npBAF complex is essential for the self-renewal/proliferative capacity of the multipotent neural stem cells. The nBAF complex along with CREST plays a role regulating the activity of genes essential for dendrite growth. This Homo sapiens (Human) protein is AT-rich interactive domain-containing protein 1A (ARID1A).